The following is a 25-amino-acid chain: Ocellatin-L1 (25 aa).

Residue Leu25 is modified to Leucine amide.

This sequence belongs to the frog skin active peptide (FSAP) family. Ocellatin subfamily. As to expression, expressed by the skin glands.

It is found in the secreted. In terms of biological role, antimicrobial peptide with activity against Gram-negative bacteria but without activity against Gram-positive bacteria. Shows a low activity in stimulating insulin release from rat BRIN-BD11 beta cells, and acts without loss of integrity of the plasma membrane. Has very low hemolytic activity. Shows weak amphipathicity in its alpha-helical conformation. The sequence is that of Ocellatin-L1 from Leptodactylus laticeps (Santa Fe frog).